Here is a 504-residue protein sequence, read N- to C-terminus: ATP synthase subunit alpha (504 aa).

ATP is bound at residue 169-176; it reads GDRKTGKT.

The protein belongs to the ATPase alpha/beta chains family. F-type ATPases have 2 components, CF(1) - the catalytic core - and CF(0) - the membrane proton channel. CF(1) has five subunits: alpha(3), beta(3), gamma(1), delta(1), epsilon(1). CF(0) has three main subunits: a(1), b(2) and c(9-12). The alpha and beta chains form an alternating ring which encloses part of the gamma chain. CF(1) is attached to CF(0) by a central stalk formed by the gamma and epsilon chains, while a peripheral stalk is formed by the delta and b chains.

It localises to the cell membrane. It catalyses the reaction ATP + H2O + 4 H(+)(in) = ADP + phosphate + 5 H(+)(out). Its function is as follows. Produces ATP from ADP in the presence of a proton gradient across the membrane. The alpha chain is a regulatory subunit. This chain is ATP synthase subunit alpha, found in Lactiplantibacillus plantarum (strain ATCC BAA-793 / NCIMB 8826 / WCFS1) (Lactobacillus plantarum).